We begin with the raw amino-acid sequence, 377 residues long: MAVSFVTTSPEEEDKPKLGLGNIQTPLIFNPSMLNLQANIPNQFIWPDDEKPSINVLELDVPLIDLQNLLSDPSSTLDASRLISEACKKHGFFLVVNHGISEELISDAHEYTSRFFDMPLSEKQRVLRKSGESVGYASSFTGRFSTKLPWKETLSFRFCDDMSRSKSVQDYFCDALGHGFQPFGKVYQEYCEAMSSLSLKIMELLGLSLGVKRDYFREFFEENDSIMRLNYYPPCIKPDLTLGTGPHCDPTSLTILHQDHVNGLQVFVENQWRSIRPNPKAFVVNIGDTFMALSNDRYKSCLHRAVVNSESERKSLAFFLCPKKDRVVTPPRELLDSITSRRYPDFTWSMFLEFTQKHYRADMNTLQAFSDWLTKPI.

Positions 222 to 322 constitute a Fe2OG dioxygenase domain; it reads ENDSIMRLNY…RKSLAFFLCP (101 aa). H247, D249, and H303 together coordinate Fe cation. R313 is an active-site residue.

This sequence belongs to the iron/ascorbate-dependent oxidoreductase family. GA20OX subfamily. Fe(2+) serves as cofactor. Requires L-ascorbate as cofactor. In terms of tissue distribution, highly expressed in stems and inflorescence tissues. Detected in seeds, roots, leaves and siliques.

The catalysed reaction is gibberellin A12 + 2 2-oxoglutarate + 3 O2 + H(+) = gibberellin A9 + 2 succinate + 3 CO2 + 2 H2O. The enzyme catalyses gibberellin A12 + 2-oxoglutarate + O2 = gibberellin A15 + succinate + CO2. It carries out the reaction gibberellin A15 + 2-oxoglutarate + O2 = gibberellin A24 + succinate + CO2 + H2O. It catalyses the reaction gibberellin A53 + 2-oxoglutarate + O2 = gibberellin A44 + succinate + CO2. Its pathway is plant hormone biosynthesis; gibberellin biosynthesis. Its function is as follows. Key oxidase enzyme in the biosynthesis of gibberellin that catalyzes the conversion of GA12 to GA9, via a three-step oxidation at C-20 of the GA skeleton. GA53 is less effectively oxidized than GA12 and is only oxidized one step to GA44. Involved in the promotion of the floral transition, fertility and silique elongation, but plays only a minor role in elongation of seedling organs. Acts redundantly with GA20OX2. This Arabidopsis thaliana (Mouse-ear cress) protein is Gibberellin 20 oxidase 1 (GA20OX1).